Consider the following 533-residue polypeptide: Peptide chain release factor 3 (533 aa).

One can recognise a tr-type G domain in the interval A9 to L284. Residues S18–T25, D95–H99, and N149–D152 each bind GTP.

This sequence belongs to the TRAFAC class translation factor GTPase superfamily. Classic translation factor GTPase family. PrfC subfamily.

The protein resides in the cytoplasm. In terms of biological role, increases the formation of ribosomal termination complexes and stimulates activities of RF-1 and RF-2. It binds guanine nucleotides and has strong preference for UGA stop codons. It may interact directly with the ribosome. The stimulation of RF-1 and RF-2 is significantly reduced by GTP and GDP, but not by GMP. In Cupriavidus pinatubonensis (strain JMP 134 / LMG 1197) (Cupriavidus necator (strain JMP 134)), this protein is Peptide chain release factor 3.